A 415-amino-acid chain; its full sequence is Serine hydroxymethyltransferase (415 aa).

(6S)-5,6,7,8-tetrahydrofolate is bound by residues leucine 121 and 125-127; that span reads GHL. An N6-(pyridoxal phosphate)lysine modification is found at lysine 229. A (6S)-5,6,7,8-tetrahydrofolate-binding site is contributed by 352–354; that stretch reads TPF.

This sequence belongs to the SHMT family. Homodimer. It depends on pyridoxal 5'-phosphate as a cofactor.

The protein localises to the cytoplasm. It carries out the reaction (6R)-5,10-methylene-5,6,7,8-tetrahydrofolate + glycine + H2O = (6S)-5,6,7,8-tetrahydrofolate + L-serine. Its pathway is one-carbon metabolism; tetrahydrofolate interconversion. It participates in amino-acid biosynthesis; glycine biosynthesis; glycine from L-serine: step 1/1. Its function is as follows. Catalyzes the reversible interconversion of serine and glycine with tetrahydrofolate (THF) serving as the one-carbon carrier. This reaction serves as the major source of one-carbon groups required for the biosynthesis of purines, thymidylate, methionine, and other important biomolecules. Also exhibits THF-independent aldolase activity toward beta-hydroxyamino acids, producing glycine and aldehydes, via a retro-aldol mechanism. This is Serine hydroxymethyltransferase from Chromobacterium violaceum (strain ATCC 12472 / DSM 30191 / JCM 1249 / CCUG 213 / NBRC 12614 / NCIMB 9131 / NCTC 9757 / MK).